A 261-amino-acid polypeptide reads, in one-letter code: MFRNILNTIGAFFSKKKESYFALYRMLGFPPKNFSIYEKALLHKSSSKRDENGCYQNNERLEFLGDAIFNAIIAVILYKKFPTNDEGFLTNTRSKIVKRDTLDKIAYQLGINHLIMISAKVKNHKHIMGNTLEAFIGAIYLDKGYLKTKEFVEKRIINPYIDIDTLVREEVNFKSKLFEWCQKHKILLQFQTLENFTDNNRNVVFQIQALLNNHIAGIGIGYSKRESQQHASQMTWRKIRTDKIFLREVFAGVKKTNSEDK.

Positions 20 to 144 (YFALYRMLGF…FIGAIYLDKG (125 aa)) constitute an RNase III domain. Position 62 (glutamate 62) interacts with Mg(2+). Aspartate 66 is a catalytic residue. Mg(2+) is bound by residues asparagine 130 and glutamate 133. Glutamate 133 is a catalytic residue. The region spanning 172-241 (NFKSKLFEWC…SQMTWRKIRT (70 aa)) is the DRBM domain.

Belongs to the ribonuclease III family. Homodimer. Mg(2+) serves as cofactor.

The protein resides in the cytoplasm. The enzyme catalyses Endonucleolytic cleavage to 5'-phosphomonoester.. Digests double-stranded RNA. Involved in the processing of primary rRNA transcript to yield the immediate precursors to the large and small rRNAs (23S and 16S). Processes some mRNAs, and tRNAs when they are encoded in the rRNA operon. Processes pre-crRNA and tracrRNA of type II CRISPR loci if present in the organism. The protein is Ribonuclease 3 of Azobacteroides pseudotrichonymphae genomovar. CFP2.